The primary structure comprises 616 residues: MALLQISEPGLSAAPHQRRLAAGIDLGTTNSLVATVRSGQAETLPDHEGRHLLPSVVHYQQQGHTVGYAARDNAAQDTANTISSVKRMMGRSLADIQARYPHLPYRFKASVNGLPMIDTAAGLLNPVRVSADILKALAARASESLSGELDGVVITVPAYFDDAQRQGTKDAARLAGLHVLRLLNEPTAAAIAYGLDSGKEGVIAVYDLGGGTFDISILRLSRGVFEVLATGGDSALGGDDFDHLLADYIREQAGIADRSDNRVQRELLDAAITAKIALSDADTVRVNVAGWQGEITREQFNDLISALVKRTLLACRRALKDAGVEPQDVLEVVMVGGSTRVPLVRERVGEFFGRTPLTAIDPDKVVAIGAAIQADILVGNKPDSEMLLLDVIPLSLGLETMGGLVEKVIPRNTTIPVARAQDFTTFKDGQTAMSIHVMQGERELVQDCRSLARFALRGIPPLPAGGAHIRVTFQVDADGLLSVTAMEKSTGVEASIQVKPSYGLTDGEIASMIKDSMSFAEQDVKARMLAEQKVEAARVLESLTGALTADAALLSAAERQCIDDAAAHLSAVAQGDDVDAIEQAIKNVDKQTQEFAARRMDQSVRRALKGHSVDEV.

This sequence belongs to the heat shock protein 70 family.

Its function is as follows. Chaperone involved in the maturation of iron-sulfur cluster-containing proteins. Has a low intrinsic ATPase activity which is markedly stimulated by HscB. Involved in the maturation of IscU. In Salmonella newport (strain SL254), this protein is Chaperone protein HscA.